Reading from the N-terminus, the 351-residue chain is S-adenosylmethionine:tRNA ribosyltransferase-isomerase (351 aa).

It belongs to the QueA family. Monomer.

Its subcellular location is the cytoplasm. The catalysed reaction is 7-aminomethyl-7-carbaguanosine(34) in tRNA + S-adenosyl-L-methionine = epoxyqueuosine(34) in tRNA + adenine + L-methionine + 2 H(+). Its pathway is tRNA modification; tRNA-queuosine biosynthesis. Functionally, transfers and isomerizes the ribose moiety from AdoMet to the 7-aminomethyl group of 7-deazaguanine (preQ1-tRNA) to give epoxyqueuosine (oQ-tRNA). In Acinetobacter baumannii (strain SDF), this protein is S-adenosylmethionine:tRNA ribosyltransferase-isomerase.